Consider the following 326-residue polypeptide: Zinc-dependent endopolyphosphatase (326 aa).

The Cytoplasmic portion of the chain corresponds to 1 to 9; sequence MEDKRKRRA. Residues 10 to 30 traverse the membrane as a helical segment; the sequence is ATLSTALILFVACCVYTLYIF. The Vacuolar segment spans residues 31 to 326; that stretch reads KFDNPRLSPP…DYELIQVQCS (296 aa). 2 N-linked (GlcNAc...) asparagine glycosylation sites follow: N90 and N241.

The protein belongs to the metallophosphoesterase superfamily. In terms of assembly, interacts with PPN1. Zn(2+) serves as cofactor. The cofactor is Co(2+). Mg(2+) is required as a cofactor.

It localises to the vacuole membrane. The catalysed reaction is [phosphate](n+1) + n H2O = (n+1) phosphate + n H(+). Its activity is regulated as follows. Not sensitive to heparin inhibition. Its function is as follows. Catalyzes the hydrolysis of inorganic polyphosphate (polyP) chains of many hundreds of phosphate residues into shorter lengths. Exclusively shows endopolyphosphatase activity, cleaving inside the polyP chain. Together with PPN1, responsible for a substantial fraction of polyphosphatase activity that is necessary to mobilize polyP stores in response to phosphate scarcity. The sequence is that of Zinc-dependent endopolyphosphatase from Saccharomyces cerevisiae (strain ATCC 204508 / S288c) (Baker's yeast).